The chain runs to 165 residues: Thiol peroxidase (165 aa).

In terms of domain architecture, Thioredoxin spans 18–165; that stretch reads PQKGAQAPAF…PNYAAALAAL (148 aa). Residue cysteine 60 is the Cysteine sulfenic acid (-SOH) intermediate of the active site. Cysteine 60 and cysteine 94 are disulfide-bonded.

This sequence belongs to the peroxiredoxin family. Tpx subfamily. As to quaternary structure, homodimer.

The catalysed reaction is a hydroperoxide + [thioredoxin]-dithiol = an alcohol + [thioredoxin]-disulfide + H2O. Thiol-specific peroxidase that catalyzes the reduction of hydrogen peroxide and organic hydroperoxides to water and alcohols, respectively. Plays a role in cell protection against oxidative stress by detoxifying peroxides. This chain is Thiol peroxidase, found in Pseudomonas aeruginosa (strain ATCC 15692 / DSM 22644 / CIP 104116 / JCM 14847 / LMG 12228 / 1C / PRS 101 / PAO1).